We begin with the raw amino-acid sequence, 196 residues long: Imidazole glycerol phosphate synthase subunit HisH (196 aa).

A Glutamine amidotransferase type-1 domain is found at 2–196; sequence NVVILDTGCA…AQLLKNFLEM (195 aa). The active-site Nucleophile is cysteine 77. Catalysis depends on residues histidine 178 and glutamate 180.

In terms of assembly, heterodimer of HisH and HisF.

The protein localises to the cytoplasm. The catalysed reaction is 5-[(5-phospho-1-deoxy-D-ribulos-1-ylimino)methylamino]-1-(5-phospho-beta-D-ribosyl)imidazole-4-carboxamide + L-glutamine = D-erythro-1-(imidazol-4-yl)glycerol 3-phosphate + 5-amino-1-(5-phospho-beta-D-ribosyl)imidazole-4-carboxamide + L-glutamate + H(+). The enzyme catalyses L-glutamine + H2O = L-glutamate + NH4(+). It functions in the pathway amino-acid biosynthesis; L-histidine biosynthesis; L-histidine from 5-phospho-alpha-D-ribose 1-diphosphate: step 5/9. In terms of biological role, IGPS catalyzes the conversion of PRFAR and glutamine to IGP, AICAR and glutamate. The HisH subunit catalyzes the hydrolysis of glutamine to glutamate and ammonia as part of the synthesis of IGP and AICAR. The resulting ammonia molecule is channeled to the active site of HisF. The polypeptide is Imidazole glycerol phosphate synthase subunit HisH (Salmonella choleraesuis (strain SC-B67)).